The following is a 337-amino-acid chain: Holliday junction branch migration complex subunit RuvB (337 aa).

Residues 1 to 22 are disordered; the sequence is MEDERITSAEVQSPDEENEELS. The segment at 1–184 is large ATPase domain (RuvB-L); the sequence is MEDERITSAE…FGIVEHMNYY (184 aa). Residues Leu23, Arg24, Gly65, Lys68, Thr69, Thr70, 131–133, Arg174, Tyr184, and Arg221 contribute to the ATP site; that span reads EDF. Thr69 contacts Mg(2+). The interval 185–255 is small ATPAse domain (RuvB-S); it reads NEADLANIVR…LVSQSLKLLQ (71 aa). Residues 258–337 form a head domain (RuvB-H) region; sequence NRGLDRTDKK…LGLIDQYMNK (80 aa). DNA is bound by residues Arg313 and Arg318.

The protein belongs to the RuvB family. As to quaternary structure, homohexamer. Forms an RuvA(8)-RuvB(12)-Holliday junction (HJ) complex. HJ DNA is sandwiched between 2 RuvA tetramers; dsDNA enters through RuvA and exits via RuvB. An RuvB hexamer assembles on each DNA strand where it exits the tetramer. Each RuvB hexamer is contacted by two RuvA subunits (via domain III) on 2 adjacent RuvB subunits; this complex drives branch migration. In the full resolvosome a probable DNA-RuvA(4)-RuvB(12)-RuvC(2) complex forms which resolves the HJ.

The protein resides in the cytoplasm. The enzyme catalyses ATP + H2O = ADP + phosphate + H(+). Its function is as follows. The RuvA-RuvB-RuvC complex processes Holliday junction (HJ) DNA during genetic recombination and DNA repair, while the RuvA-RuvB complex plays an important role in the rescue of blocked DNA replication forks via replication fork reversal (RFR). RuvA specifically binds to HJ cruciform DNA, conferring on it an open structure. The RuvB hexamer acts as an ATP-dependent pump, pulling dsDNA into and through the RuvAB complex. RuvB forms 2 homohexamers on either side of HJ DNA bound by 1 or 2 RuvA tetramers; 4 subunits per hexamer contact DNA at a time. Coordinated motions by a converter formed by DNA-disengaged RuvB subunits stimulates ATP hydrolysis and nucleotide exchange. Immobilization of the converter enables RuvB to convert the ATP-contained energy into a lever motion, pulling 2 nucleotides of DNA out of the RuvA tetramer per ATP hydrolyzed, thus driving DNA branch migration. The RuvB motors rotate together with the DNA substrate, which together with the progressing nucleotide cycle form the mechanistic basis for DNA recombination by continuous HJ branch migration. Branch migration allows RuvC to scan DNA until it finds its consensus sequence, where it cleaves and resolves cruciform DNA. The sequence is that of Holliday junction branch migration complex subunit RuvB from Pediococcus pentosaceus (strain ATCC 25745 / CCUG 21536 / LMG 10740 / 183-1w).